The sequence spans 294 residues: Aquaporin-B (294 aa).

The tract at residues 1 to 31 (MSLKRSDDYQDLEEGIAMEDGGNIKDEEEKP) is disordered. Residues 1–42 (MSLKRSDDYQDLEEGIAMEDGGNIKDEEEKPLDPIEEQNKKR) are Cytoplasmic-facing. Basic and acidic residues predominate over residues 22–31 (GNIKDEEEKP). A helical membrane pass occupies residues 43 to 63 (WVLIRAVLGELLCTFLFVYVL). Over 64–79 (CATSANFIRLGSPPNP) the chain is Extracellular. S75 is a glycosylation site (O-linked (GalNAc...) serine). The helical transmembrane segment at 80–100 (VVGGLSTGFAAVALIYSFADV) threads the bilayer. Residues 101–123 (SGAHFNPAVTFATCVTRKTSITK) are Cytoplasmic-facing. The NPA 1 motif lies at 106–108 (NPA). The helical transmembrane segment at 124 to 144 (GLMYVGAQLVGSVLASLILLA) threads the bilayer. Residues 145–172 (TFPGNFPGDKNAASAVAIAPSTDANIGN) lie on the Extracellular side of the membrane. The chain crosses the membrane as a helical span at residues 173–193 (AFLTELVLTFILVYVIFAVAF). Residues 194 to 224 (DTVDNSVKTKVVGKSSSNNLTIYTTSGQTKA) are Cytoplasmic-facing. Residues 208–219 (SSSNNLTIYTTS) are required for water permeability. The helical transmembrane segment at 225–245 (GFAPIAIGFTLGFLCFLGGSV) threads the bilayer. Over 246–268 (SGGAFNPARVFGTALVGNNWTRH) the chain is Extracellular. An NPA 2 motif is present at residues 251-253 (NPA). The chain crosses the membrane as a helical span at residues 269–289 (WMYWIADFLGAGLAGFAQKFF). Over 290 to 294 (SSTHK) the chain is Cytoplasmic.

Belongs to the MIP/aquaporin (TC 1.A.8) family. In terms of processing, glycosylated and non-glycosylated forms exist throughout all developmental stages.

The protein resides in the cell membrane. It is found in the cytoplasmic vesicle. Putatively gated water-specific channel, requiring a cysteine residue within the channel. Impermeable to water, glycerol and urea when expressed in Xenopus oocytes. Not regulated by pH; channels remain impermeable to water at pH 7.4 and 5.2. In Dictyostelium discoideum (Social amoeba), this protein is Aquaporin-B.